The following is a 503-amino-acid chain: E3 ubiquitin-protein ligase ariadne-1 (503 aa).

Acidic residues predominate over residues methionine 1–aspartate 11. The disordered stretch occupies residues methionine 1–arginine 40. The segment covering asparagine 12–glycine 21 has biased composition (low complexity). The interval glutamine 129–aspartate 340 is TRIAD supradomain. Zn(2+)-binding residues include cysteine 133, cysteine 136, cysteine 150, histidine 152, cysteine 155, cysteine 158, cysteine 178, cysteine 183, cysteine 223, cysteine 228, cysteine 244, cysteine 246, cysteine 251, cysteine 254, histidine 259, cysteine 264, cysteine 291, and cysteine 294. Residues cysteine 133–cysteine 183 form an RING-type 1 zinc finger. Positions cysteine 133–valine 201 are important for interaction with Ubc10. An IBR-type zinc finger spans residues valine 203–cysteine 264. The RING-type 2; atypical zinc-finger motif lies at cysteine 291–cysteine 322. Residue cysteine 304 is part of the active site. Residues cysteine 309, cysteine 314, cysteine 319, cysteine 322, histidine 329, and cysteine 336 each coordinate Zn(2+). Residues glutamate 341 to tyrosine 361 are a coiled coil.

This sequence belongs to the RBR family. Ariadne subfamily. In terms of assembly, can form homodimers. Interacts (via RING-type 1 zinc finger) with Ubc10. Interacts with the LINC complex member koi. Interacts with park. Interacts with ari-2. Specifically interacts with isoform ECR-A of EcR. Autophosphorylated. In terms of tissue distribution, widely expressed, with prominent levels in the nervous system and female gonads.

The protein resides in the cytoplasm. It localises to the nucleus. It carries out the reaction [E2 ubiquitin-conjugating enzyme]-S-ubiquitinyl-L-cysteine + [acceptor protein]-L-lysine = [E2 ubiquitin-conjugating enzyme]-L-cysteine + [acceptor protein]-N(6)-ubiquitinyl-L-lysine.. Atypical E3 ubiquitin-protein ligase, which catalyzes ubiquitination of target proteins together with ubiquitin-conjugating enzyme E2 Ubc10. Controls the subcellular localization and morphology of muscle nuclei (myonuclei) by regulating the protein levels and distribution of the LINC (LInker of Nucleoskeleton and Cytoskeleton) complex. Functions by mediating the monoubiquitination of the LINC complex subunit koi leading to its subsequent proteasomal degradation. Appears to function, at least partially redundantly, with the RBR E3 ligase family member park in nuclear localization and morphology. Likely to function in metamorphosis by regulating the proteins levels of EcR isoform A (ECR-A) and its heterodimeric partner usp, via the ubiquitination and subsequent degradation of ECR-A. The sequence is that of E3 ubiquitin-protein ligase ariadne-1 from Drosophila melanogaster (Fruit fly).